Here is a 60-residue protein sequence, read N- to C-terminus: Large ribosomal subunit protein uL30 (60 aa).

The protein belongs to the universal ribosomal protein uL30 family. As to quaternary structure, part of the 50S ribosomal subunit.

This Shewanella baltica (strain OS223) protein is Large ribosomal subunit protein uL30.